A 237-amino-acid polypeptide reads, in one-letter code: C-type lectin domain family 4 member A (237 aa).

At 1–48 (MTSEITYAEVRFKNEFKSSGINTASSAASKERTAPHKSNTGFPKLLCA) the chain is on the cytoplasmic side. Residues 5 to 10 (ITYAEV) carry the ITIM motif motif. A helical; Signal-anchor for type II membrane protein transmembrane segment spans residues 49-69 (SLLIFFLLLAISFFIAFVIFF). Residues 70-237 (QKYSQLLEKK…SVCEMMKIHL (168 aa)) are Extracellular-facing. Disulfide bonds link Cys-106/Cys-117, Cys-134/Cys-230, and Cys-203/Cys-222. One can recognise a C-type lectin domain in the interval 113-231 (FSSNCYFIST…CLGPQRSVCE (119 aa)). Residues Val-143, Asn-145, and Glu-149 each contribute to the Ca(2+) site. An N-linked (GlcNAc...) asparagine glycan is attached at Asn-185. Residues Glu-195, Ser-197, and Glu-201 each contribute to the Ca(2+) site. Residues 195–197 (EPS) and Glu-201 each bind alpha-D-mannopyranose. Position 207–209 (207–209 (NFR)) interacts with N-acetyl-D-glucosamine. Ca(2+) is bound by residues Asn-218, Asp-219, and Glu-231.

May interact with PTPN6 via its ITIM motif. Expressed preferentially in hematopoietic tissues. Expressed in all circulating Ag-presenting cells such as dendritic cells, myeloid cells, monocytes, macrophages, B-cells and epidermal Langerhans cells (at protein level). Expressed in peripheral blood leukocytes, neutrophils, moderate quantities in spleen, lymph node, and bone marrow, and at very low levels in thymus.

Its subcellular location is the cell membrane. In terms of biological role, C-type lectin receptor that binds carbohydrates mannose and fucose but also weakly interacts with N-acetylglucosamine (GlcNAc) in a Ca(2+)-dependent manner. Involved in regulating immune reactivity. Once triggered by antigen, it is internalized by clathrin-dependent endocytosis and delivers its antigenic cargo into the antigen presentation pathway resulting in cross-priming of CD8(+) T cells. This cross-presentation and cross-priming are enhanced by TLR7 and TLR8 agonists with increased expansion of the CD8(+) T cells, high production of IFNG and TNF with reduced levels of IL4, IL5 and IL13. In plasmacytoid dendritic cells, inhibits TLR9-mediated IFNA and TNF production. May be involved via its ITIM motif (immunoreceptor tyrosine-based inhibitory motifs) in the inhibition of B-cell-receptor-mediated calcium mobilization and protein tyrosine phosphorylation. (Microbial infection) Involved in the interaction between HIV-1 virus and dendritic cells. Enhances HIV-1 binding/entry and virus infection. Requires ITIM motif-associated signal transduction pathway involving phosphatases PTPN6 and PTPN11, SYK, Src kinases and MAP kinases. The chain is C-type lectin domain family 4 member A from Homo sapiens (Human).